The following is a 456-amino-acid chain: MSSGWSQNDHRSYSNPPPVSGKRPRNDSGNKVTVVLGAQWGDEGKGKVVDLLATESDIVGRCQGGNNAGHTVVVEEKEYDFHLLPSGIINTKCTSFIGNGVVIHLPGLFEEIDKNEKKGLKGWEKRLVISDRAHIVFDFHQAVDGLQETQRQAQEGKNIGTTKKGIGPTYACKASRTGLRICDLMADFNEFSTRVKNLVQQYQSMYPTLKVDVESELKKLKEYAERIRPLVRDGVYFMYDAIHGPQKKILVEGANAALLDIDFGTYPFVTSSNCTVGGVCTGLGIPPANIGDVYGVSKAYTTRVGIGAFPTEQLNAVGELLQTRGHEVGVTTGRKRRCGWLDLVILKYAHMINGFTAIALTKLDILDVLDEIKVGVAYKINGKRIPHFPANLEVLQKVEVEYETFPGWKSDTSAARKWGDLPAKAQNYIRFVENHIGVPIKWVGVGKSRECMIQMF.

A disordered region spans residues 1 to 30; it reads MSSGWSQNDHRSYSNPPPVSGKRPRNDSGN. GTP-binding positions include 41 to 47 and 69 to 71; these read GDEGKGK and GHT. D42 acts as the Proton acceptor in catalysis. Positions 42 and 69 each coordinate Mg(2+). D42 lines the substrate pocket. Residues 42–45 and 67–70 contribute to the IMP site; these read DEGK and NAGH. Residue H70 is the Proton donor of the active site. S130 carries the phosphoserine modification. Residues T162, R176, N255, T270, and R334 each coordinate IMP. 330-336 is a binding site for substrate; it reads VTTGRKR. Residues R336, 362–364, and 444–447 contribute to the GTP site; these read KLD and GVGK.

It belongs to the adenylosuccinate synthetase family. As to quaternary structure, homodimer. Mg(2+) serves as cofactor.

It is found in the cytoplasm. The catalysed reaction is IMP + L-aspartate + GTP = N(6)-(1,2-dicarboxyethyl)-AMP + GDP + phosphate + 2 H(+). Its pathway is purine metabolism; AMP biosynthesis via de novo pathway; AMP from IMP: step 1/2. Component of the purine nucleotide cycle (PNC), which interconverts IMP and AMP to regulate the nucleotide levels in various tissues, and which contributes to glycolysis and ammoniagenesis. Catalyzes the first committed step in the biosynthesis of AMP from IMP. The sequence is that of Adenylosuccinate synthetase isozyme 1 (adss1) from Danio rerio (Zebrafish).